Consider the following 102-residue polypeptide: UPF0045 protein Mb1933 (102 aa).

Belongs to the UPF0045 family.

The chain is UPF0045 protein Mb1933 from Mycobacterium bovis (strain ATCC BAA-935 / AF2122/97).